Consider the following 592-residue polypeptide: Delta-like protein 3 (592 aa).

An N-terminal signal peptide occupies residues 1–32 (MVSLQVSPLSQTLILAFLLPQALPAGVFELQI). Residues 33-490 (HSFGPGPGLG…LRQADPQRFL (458 aa)) lie on the Extracellular side of the membrane. One can recognise a DSL domain in the interval 174 to 213 (ARCEPPAVGAACARLCRSRSAPSRCGPGLRPCTPFPDECE). EGF-like domains lie at 214–247 (APSVCRPGCSPEHGYCEEPDECRCLEGWTGPLCT), 272–308 (GPGPCDGNPCANGGSCSETSGSFECACPRGFYGLRCE), 310–349 (SGVTCADGPCFNGGLCVGGEDPDSAYVCHCPPGFQGSNCE), 351–387 (RVDRCSLQPCQNGGLCLDLGHALRCRCRAGFAGPRCE), 389–425 (DLDDCAGRACANGGTCVEGGGSRRCSCALGFGGRDCR), and 427–463 (RADPCASRPCAHGGRCYAHFSGLVCACAPGYMGVRCE). 18 disulfide bridges follow: cysteine 218–cysteine 229, cysteine 222–cysteine 235, cysteine 237–cysteine 246, cysteine 276–cysteine 287, cysteine 281–cysteine 296, cysteine 298–cysteine 307, cysteine 314–cysteine 325, cysteine 319–cysteine 337, cysteine 339–cysteine 348, cysteine 355–cysteine 366, cysteine 360–cysteine 375, cysteine 377–cysteine 386, cysteine 393–cysteine 404, cysteine 398–cysteine 413, cysteine 415–cysteine 424, cysteine 431–cysteine 442, cysteine 436–cysteine 451, and cysteine 453–cysteine 462. The chain crosses the membrane as a helical span at residues 491-511 (LPPALGLLVAAGLAGAALLVI). Residues 512–592 (HVRRRGPGQD…REDWLIQVLF (81 aa)) are Cytoplasmic-facing. Residues 548–567 (QDGAGDGPSSSADWNHPEDG) form a disordered region.

In terms of assembly, can bind and activate Notch-1 or another Notch receptor. Post-translationally, ubiquitinated by MIB (MIB1 or MIB2), leading to its endocytosis and subsequent degradation. In terms of tissue distribution, predominantly expressed in the neuroectoderm and paraxial mesoderm during embryogenesis.

The protein localises to the membrane. Functionally, inhibits primary neurogenesis. May be required to divert neurons along a specific differentiation pathway. Plays a role in the formation of somite boundaries during segmentation of the paraxial mesoderm. This chain is Delta-like protein 3 (Dll3), found in Mus musculus (Mouse).